Here is a 426-residue protein sequence, read N- to C-terminus: MLDPTLLRQQLAKLAECLLTVRGFTLDVAALEALESERKRIQVHTQELQSLRNSKSKAIGQARSKGEDVSALMAEVAAFSDDLKASEIALEEIRTELEKVALDIPNLPQQDVPLGADERENVEQARWGVPRTFDFAIKDHVELGACHGWLDAESAAKLSGARFTVLRGPIARLHRALAQCMLDLHVSQHGYEEVNVPIIVNADSLHGTGQLPKFEEDMFSTQLGEHRRYLISTSEISLTNLVRNEIIEADRLPLRMVAHSLCFRSEAGSGGRDTRGMIRQHQFEKVELVSVCKPQESEGEHHRMTRCAETVLEMLGLPYRKILLCTGDMGFAATKTYDLEVWLPSQGMYREISSCSNCGDFQARRMQARWRNSVTGKPELVHTLNGSGVAVGRAMIAVMENYQNADGSITVPEVLRPYMDGLSRIG.

Residue 233 to 235 participates in L-serine binding; the sequence is TSE. Residue 264 to 266 participates in ATP binding; the sequence is RSE. Glutamate 287 provides a ligand contact to L-serine. Residue 351–354 coordinates ATP; it reads EISS. Residue serine 387 coordinates L-serine.

It belongs to the class-II aminoacyl-tRNA synthetase family. Type-1 seryl-tRNA synthetase subfamily. As to quaternary structure, homodimer. The tRNA molecule binds across the dimer.

The protein resides in the cytoplasm. The catalysed reaction is tRNA(Ser) + L-serine + ATP = L-seryl-tRNA(Ser) + AMP + diphosphate + H(+). The enzyme catalyses tRNA(Sec) + L-serine + ATP = L-seryl-tRNA(Sec) + AMP + diphosphate + H(+). Its pathway is aminoacyl-tRNA biosynthesis; selenocysteinyl-tRNA(Sec) biosynthesis; L-seryl-tRNA(Sec) from L-serine and tRNA(Sec): step 1/1. Its function is as follows. Catalyzes the attachment of serine to tRNA(Ser). Is also able to aminoacylate tRNA(Sec) with serine, to form the misacylated tRNA L-seryl-tRNA(Sec), which will be further converted into selenocysteinyl-tRNA(Sec). The sequence is that of Serine--tRNA ligase from Xylella fastidiosa (strain M12).